The chain runs to 154 residues: Ribosome maturation factor RimP (154 aa).

Belongs to the RimP family.

The protein localises to the cytoplasm. Required for maturation of 30S ribosomal subunits. This is Ribosome maturation factor RimP from Alkaliphilus oremlandii (strain OhILAs) (Clostridium oremlandii (strain OhILAs)).